A 66-amino-acid chain; its full sequence is Large ribosomal subunit protein uL29 (66 aa).

Belongs to the universal ribosomal protein uL29 family.

The protein is Large ribosomal subunit protein uL29 of Borrelia turicatae (strain 91E135).